The sequence spans 134 residues: Small ribosomal subunit protein uS12 (134 aa).

A disordered region spans residues Met1–Lys30. At Asp89 the chain carries 3-methylthioaspartic acid. The interval Gly106–Lys134 is disordered. The span at Gln112–Lys123 shows a compositional bias: basic residues. Residues Ala124–Lys134 are compositionally biased toward low complexity.

Belongs to the universal ribosomal protein uS12 family. As to quaternary structure, part of the 30S ribosomal subunit. Contacts proteins S8 and S17. May interact with IF1 in the 30S initiation complex.

In terms of biological role, with S4 and S5 plays an important role in translational accuracy. Functionally, interacts with and stabilizes bases of the 16S rRNA that are involved in tRNA selection in the A site and with the mRNA backbone. Located at the interface of the 30S and 50S subunits, it traverses the body of the 30S subunit contacting proteins on the other side and probably holding the rRNA structure together. The combined cluster of proteins S8, S12 and S17 appears to hold together the shoulder and platform of the 30S subunit. The chain is Small ribosomal subunit protein uS12 from Fervidobacterium nodosum (strain ATCC 35602 / DSM 5306 / Rt17-B1).